We begin with the raw amino-acid sequence, 163 residues long: Staphylokinase (163 aa).

A signal peptide spans 1 to 27 (MLKRSLLFLTVLLLLFSFSSITNEVSA).

The protein belongs to the staphylokinase family.

The protein localises to the secreted. Potent plasminogen activator that converts plasminogen into plasmin. It forms a 1:1 complex with plasmin, which in turn activates other plasminogen molecules. In Staphylococcus phage phi13 (Bacteriophage phi-13), this protein is Staphylokinase (sak).